The chain runs to 437 residues: Serine carboxypeptidase-like 7 (437 aa).

The N-terminal stretch at 1-25 is a signal peptide; sequence MANDYVSTVLLLLSLLIFLSQRTDS. Cystine bridges form between C84-C327, C248-C262, and C286-C293. Residue N105 is glycosylated (N-linked (GlcNAc...) asparagine). S180 is an active-site residue. N346 is a glycosylation site (N-linked (GlcNAc...) asparagine). Residue D362 is part of the active site. N-linked (GlcNAc...) asparagine glycosylation occurs at N378. H415 is an active-site residue.

This sequence belongs to the peptidase S10 family. Ubiquitous.

Its subcellular location is the secreted. Functionally, probable carboxypeptidase. This chain is Serine carboxypeptidase-like 7 (SCPL7), found in Arabidopsis thaliana (Mouse-ear cress).